The sequence spans 662 residues: Acetyl-coenzyme A synthetase (662 aa).

CoA is bound by residues 197–200 (RKGK) and Thr317. ATP-binding positions include 393-395 (GEP), 417-422 (DTWWQT), Asp510, and Arg525. Ser533 provides a ligand contact to CoA. Arg536 contributes to the ATP binding site. Mg(2+) contacts are provided by His549 and Val552. The residue at position 623 (Lys623) is an N6-acetyllysine.

It belongs to the ATP-dependent AMP-binding enzyme family. Requires Mg(2+) as cofactor. Post-translationally, acetylated. Deacetylation by the SIR2-homolog deacetylase activates the enzyme.

The enzyme catalyses acetate + ATP + CoA = acetyl-CoA + AMP + diphosphate. In terms of biological role, catalyzes the conversion of acetate into acetyl-CoA (AcCoA), an essential intermediate at the junction of anabolic and catabolic pathways. AcsA undergoes a two-step reaction. In the first half reaction, AcsA combines acetate with ATP to form acetyl-adenylate (AcAMP) intermediate. In the second half reaction, it can then transfer the acetyl group from AcAMP to the sulfhydryl group of CoA, forming the product AcCoA. In Helicobacter pylori (strain G27), this protein is Acetyl-coenzyme A synthetase.